The following is a 416-amino-acid chain: D-amino acid dehydrogenase (416 aa).

Residue 3-17 participates in FAD binding; it reads ITILGSGVIGVTTAY.

It belongs to the DadA oxidoreductase family. It depends on FAD as a cofactor.

The catalysed reaction is a D-alpha-amino acid + A + H2O = a 2-oxocarboxylate + AH2 + NH4(+). It functions in the pathway amino-acid degradation; D-alanine degradation; NH(3) and pyruvate from D-alanine: step 1/1. Functionally, oxidative deamination of D-amino acids. This Brucella abortus (strain S19) protein is D-amino acid dehydrogenase.